The following is a 130-amino-acid chain: Small ribosomal subunit protein uS11 (130 aa).

Belongs to the universal ribosomal protein uS11 family. Part of the 30S ribosomal subunit. Interacts with proteins S7 and S18. Binds to IF-3.

Functionally, located on the platform of the 30S subunit, it bridges several disparate RNA helices of the 16S rRNA. Forms part of the Shine-Dalgarno cleft in the 70S ribosome. In Thermotoga petrophila (strain ATCC BAA-488 / DSM 13995 / JCM 10881 / RKU-1), this protein is Small ribosomal subunit protein uS11.